Consider the following 912-residue polypeptide: Protein translocase subunit SecA (912 aa).

Residues Gln87, 105–109, and Asp509 contribute to the ATP site; that span reads GEGKT. The segment covering 847–859 has biased composition (basic and acidic residues); the sequence is RERAVSQPVHEDA. A disordered region spans residues 847–912; it reads RERAVSQPVH…KYKHCHGKLN (66 aa). Positions 867–878 are enriched in acidic residues; sequence AESEEASGESAD. Residues 881–892 are compositionally biased toward basic and acidic residues; that stretch reads QPVRRDGPKVGR. Positions 896, 898, 907, and 908 each coordinate Zn(2+). The span at 902 to 912 shows a compositional bias: basic residues; that stretch reads KKYKHCHGKLN.

It belongs to the SecA family. In terms of assembly, monomer and homodimer. Part of the essential Sec protein translocation apparatus which comprises SecA, SecYEG and auxiliary proteins SecDF-YajC and YidC. Zn(2+) serves as cofactor.

It is found in the cell inner membrane. The protein localises to the cytoplasm. It catalyses the reaction ATP + H2O + cellular proteinSide 1 = ADP + phosphate + cellular proteinSide 2.. In terms of biological role, part of the Sec protein translocase complex. Interacts with the SecYEG preprotein conducting channel. Has a central role in coupling the hydrolysis of ATP to the transfer of proteins into and across the cell membrane, serving both as a receptor for the preprotein-SecB complex and as an ATP-driven molecular motor driving the stepwise translocation of polypeptide chains across the membrane. The sequence is that of Protein translocase subunit SecA from Chromohalobacter salexigens (strain ATCC BAA-138 / DSM 3043 / CIP 106854 / NCIMB 13768 / 1H11).